The following is a 489-amino-acid chain: Putative ATP-dependent RNA helicase T26G10.1 (489 aa).

The Q motif signature appears at 44–72 (KSFAELGVSQPLCDACQRLGWMKPSKIQQ). The Helicase ATP-binding domain occupies 75–246 (LPHALQGKDV…RASLRDPARV (172 aa)). 88–95 (AETGSGKT) contacts ATP. The DEAD box motif lies at 194–197 (DEAD). The region spanning 257–417 (NLKQHYIFVP…EYKCVENEVM (161 aa)) is the Helicase C-terminal domain. The disordered stretch occupies residues 433–489 (EMKEMDEKKKSGKKRRQNDDFGDTEESGGRFKMGIKSMGGRGGSGGGRGGKKKKMSK). Positions 469-480 (SMGGRGGSGGGR) are enriched in gly residues.

This sequence belongs to the DEAD box helicase family. DDX47/RRP3 subfamily.

Its subcellular location is the nucleus. The enzyme catalyses ATP + H2O = ADP + phosphate + H(+). In terms of biological role, probable ATP-dependent RNA helicase which may be involved in ribosome biogenesis. The protein is Putative ATP-dependent RNA helicase T26G10.1 of Caenorhabditis elegans.